A 745-amino-acid polypeptide reads, in one-letter code: 1,4-alpha-glucan branching enzyme GlgB (745 aa).

Aspartate 416 (nucleophile) is an active-site residue. The active-site Proton donor is glutamate 469.

The protein belongs to the glycosyl hydrolase 13 family. GlgB subfamily. In terms of assembly, monomer.

The enzyme catalyses Transfers a segment of a (1-&gt;4)-alpha-D-glucan chain to a primary hydroxy group in a similar glucan chain.. Its pathway is glycan biosynthesis; glycogen biosynthesis. Its function is as follows. Catalyzes the formation of the alpha-1,6-glucosidic linkages in glycogen by scission of a 1,4-alpha-linked oligosaccharide from growing alpha-1,4-glucan chains and the subsequent attachment of the oligosaccharide to the alpha-1,6 position. The sequence is that of 1,4-alpha-glucan branching enzyme GlgB from Shewanella sp. (strain W3-18-1).